Here is a 270-residue protein sequence, read N- to C-terminus: Formamidopyrimidine-DNA glycosylase (270 aa).

The active-site Schiff-base intermediate with DNA is the proline 2. Glutamate 3 acts as the Proton donor in catalysis. Catalysis depends on lysine 57, which acts as the Proton donor; for beta-elimination activity. Positions 90, 109, and 151 each coordinate DNA. The FPG-type zinc-finger motif lies at 236-270 (QVYGRGGKLCMVCSNRLKEVRLGQRSTVYCTQCQR). Arginine 260 serves as the catalytic Proton donor; for delta-elimination activity.

It belongs to the FPG family. Monomer. It depends on Zn(2+) as a cofactor.

It carries out the reaction Hydrolysis of DNA containing ring-opened 7-methylguanine residues, releasing 2,6-diamino-4-hydroxy-5-(N-methyl)formamidopyrimidine.. The catalysed reaction is 2'-deoxyribonucleotide-(2'-deoxyribose 5'-phosphate)-2'-deoxyribonucleotide-DNA = a 3'-end 2'-deoxyribonucleotide-(2,3-dehydro-2,3-deoxyribose 5'-phosphate)-DNA + a 5'-end 5'-phospho-2'-deoxyribonucleoside-DNA + H(+). Functionally, involved in base excision repair of DNA damaged by oxidation or by mutagenic agents. Acts as a DNA glycosylase that recognizes and removes damaged bases. Has a preference for oxidized purines, such as 7,8-dihydro-8-oxoguanine (8-oxoG). Has AP (apurinic/apyrimidinic) lyase activity and introduces nicks in the DNA strand. Cleaves the DNA backbone by beta-delta elimination to generate a single-strand break at the site of the removed base with both 3'- and 5'-phosphates. This Idiomarina loihiensis (strain ATCC BAA-735 / DSM 15497 / L2-TR) protein is Formamidopyrimidine-DNA glycosylase.